Reading from the N-terminus, the 560-residue chain is Putative transport protein VFMJ11_0927 (560 aa).

The next 5 helical transmembrane spans lie at 8–28 (LLSQ…LFIA), 37–57 (LGSS…GYTF), 66–86 (FMLF…GIFL), 94–114 (LLVL…GHYF), and 161–181 (NLSV…ILLA). RCK C-terminal domains follow at residues 203–292 (RGIG…FRNG) and 293–376 (KEVF…KIGF). Transmembrane regions (helical) follow at residues 386 to 406 (LLAF…TMSF), 409 to 429 (VTFG…LGFL), 451 to 471 (GLLV…NEYF), 478 to 498 (VLAA…LVGA), and 539 to 559 (AGTY…MILL).

The protein belongs to the AAE transporter (TC 2.A.81) family. YbjL subfamily.

The protein localises to the cell membrane. In Aliivibrio fischeri (strain MJ11) (Vibrio fischeri), this protein is Putative transport protein VFMJ11_0927.